The chain runs to 374 residues: Alginate lyase (374 aa).

The first 23 residues, 1–23 (MHKTRLALSCLLGSLLLSGAVHA), serve as a signal peptide directing secretion. Residues 62 to 63 (SK), 135 to 136 (HT), and Tyr-253 contribute to the substrate site.

Belongs to the polysaccharide lyase 5 family.

It is found in the periplasm. It carries out the reaction Eliminative cleavage of alginate to give oligosaccharides with 4-deoxy-alpha-L-erythro-hex-4-enuronosyl groups at their non-reducing ends and beta-D-mannuronate at their reducing end.. Functionally, catalyzes the depolymerization of alginate by cleaving the beta-1,4 glycosidic bond between two adjacent sugar residues via a beta-elimination mechanism. May serve to degrade mislocalized alginate that is trapped in the periplasmic space. The polypeptide is Alginate lyase (Azotobacter vinelandii (strain DJ / ATCC BAA-1303)).